A 200-amino-acid polypeptide reads, in one-letter code: Eukaryotic translation initiation factor isoform 4E (200 aa).

Positions 1–22 are disordered; the sequence is MATEAPIEATEVPPASATETVA. MRNA is bound by residues 44 to 49, Lys-76, and 94 to 95; these read QGAAWG and WE. An intrachain disulfide couples Cys-99 to Cys-138. MRNA-binding positions include 145-150 and 189-192; these read RRSQDK and KRER.

It belongs to the eukaryotic initiation factor 4E family. EIF4F is a multi-subunit complex, the composition of which varies with external and internal environmental conditions. It is composed of at least EIF4A, EIF4E and EIF4G. EIF4E is also known to interact with other partners. In higher plants two isoforms of EIF4F have been identified, named isoform EIF4F and isoform EIF(iso)4F. Isoform EIF4F has subunits p220 and p26, whereas isoform EIF(iso)4F has subunits p82 and p28. In terms of assembly, (Microbial infection) Interacts with viral genome-linked protein (VPg); this interaction is possible in susceptible hosts but impaired in resistant plants. In terms of processing, according to the redox status, the Cys-99-Cys-138 disulfide bridge may have a role in regulating protein function by affecting its ability to bind capped mRNA. As to expression, expressed ubiquitously in seedlings, roots, leaves, sepals, petals, anthers and dehisced pollen, with highest levels in pollen, maturing anthers and roots. Strongly expressed in susceptible plants but not in resistant ones.

It localises to the cytoplasm. Its subcellular location is the nucleus. Functionally, component of the protein complex eIF4F, which is involved in the recognition of the mRNA cap, ATP-dependent unwinding of 5'-terminal secondary structure and recruitment of mRNA to the ribosome. Recognizes and binds the 7-methylguanosine-containing mRNA cap during an early step in the initiation of protein synthesis and facilitates ribosome binding by inducing the unwinding of the mRNAs secondary structures. Key component of recessive resistance to potyviruses. (Microbial infection) Susceptibility host factor required for viral infection (e.g. potato virus Y (PVY) and pepper mottle virus (PepMoV)) by recruiting viral RNAs to the host ribosomal complex via an interaction with viral genome-linked protein (VPg). The polypeptide is Eukaryotic translation initiation factor isoform 4E (Nicotiana tabacum (Common tobacco)).